A 277-amino-acid polypeptide reads, in one-letter code: Uridine phosphorylase (277 aa).

It belongs to the PNP/UDP phosphorylase family.

The protein resides in the cytoplasm. The enzyme catalyses uridine + phosphate = alpha-D-ribose 1-phosphate + uracil. It functions in the pathway pyrimidine metabolism; UMP biosynthesis via salvage pathway; uracil from uridine (phosphorylase route): step 1/1. Its function is as follows. Catalyzes the reversible phosphorylytic cleavage of uridine to uracil and ribose-1-phosphate. The sequence is that of Uridine phosphorylase from Thermococcus kodakarensis (strain ATCC BAA-918 / JCM 12380 / KOD1) (Pyrococcus kodakaraensis (strain KOD1)).